The primary structure comprises 1019 residues: TOG array regulator of axonemal microtubules protein 2 (1019 aa).

4 disordered regions span residues 28-54, 131-158, 249-311, and 991-1019; these read AGPRVLPPGSINSSLPHGEGSLQPEPR, RRLSEGLAASSRASLDPGGGPQGVPLHS, TPSR…AKKP, and SLGGSRKATDRGVAPDSKTTGSSYPFQLD. Polar residues predominate over residues 1007–1019; sequence SKTTGSSYPFQLD.

It belongs to the Crescerin family.

The sequence is that of TOG array regulator of axonemal microtubules protein 2 from Homo sapiens (Human).